Consider the following 421-residue polypeptide: 2-deoxystreptamine N-acetyl-D-glucosaminyltransferase (421 aa).

The protein belongs to the glycosyltransferase group 1 family. Glycosyltransferase 4 subfamily.

It carries out the reaction 2-deoxystreptamine + UDP-N-acetyl-alpha-D-glucosamine = 2'-N-acetylparomamine + UDP + H(+). It participates in antibiotic biosynthesis; neomycin biosynthesis. Its function is as follows. Glycosyltransferase involved in the biosynthesis of neomycin by mediating conversion of 2-deoxystreptamine (2-DOS) to 2'-N-acetylparomamine using UDP-alpha-D-glucosamine as sugar donor. This is 2-deoxystreptamine N-acetyl-D-glucosaminyltransferase (neoD) from Streptomyces fradiae (Streptomyces roseoflavus).